Here is a 98-residue protein sequence, read N- to C-terminus: Co-chaperonin GroES (98 aa).

It belongs to the GroES chaperonin family. In terms of assembly, heptamer of 7 subunits arranged in a ring. Interacts with the chaperonin GroEL.

Its subcellular location is the cytoplasm. Its function is as follows. Together with the chaperonin GroEL, plays an essential role in assisting protein folding. The GroEL-GroES system forms a nano-cage that allows encapsulation of the non-native substrate proteins and provides a physical environment optimized to promote and accelerate protein folding. GroES binds to the apical surface of the GroEL ring, thereby capping the opening of the GroEL channel. The sequence is that of Co-chaperonin GroES from Bartonella quintana (strain Toulouse) (Rochalimaea quintana).